Here is a 429-residue protein sequence, read N- to C-terminus: L-cysteine:1D-myo-inositol 2-amino-2-deoxy-alpha-D-glucopyranoside ligase (429 aa).

Cysteine 60 is a binding site for Zn(2+). L-cysteinyl-5'-AMP contacts are provided by residues cysteine 60–threonine 63, threonine 75, and asparagine 98–threonine 100. The short motif at isoleucine 62–histidine 72 is the 'HIGH' region element. The 'ERGGDP' region motif lies at glutamate 204–proline 209. Position 244 (tryptophan 244) interacts with L-cysteinyl-5'-AMP. Cysteine 248 is a Zn(2+) binding site. Glycine 266 to aspartate 268 contacts L-cysteinyl-5'-AMP. Position 273 (histidine 273) interacts with Zn(2+). Isoleucine 300 contributes to the L-cysteinyl-5'-AMP binding site. The 'KMSKS' region motif lies at lysine 306–serine 310.

This sequence belongs to the class-I aminoacyl-tRNA synthetase family. MshC subfamily. Monomer. Requires Zn(2+) as cofactor.

The catalysed reaction is 1D-myo-inositol 2-amino-2-deoxy-alpha-D-glucopyranoside + L-cysteine + ATP = 1D-myo-inositol 2-(L-cysteinylamino)-2-deoxy-alpha-D-glucopyranoside + AMP + diphosphate + H(+). Its function is as follows. Catalyzes the ATP-dependent condensation of GlcN-Ins and L-cysteine to form L-Cys-GlcN-Ins. The protein is L-cysteine:1D-myo-inositol 2-amino-2-deoxy-alpha-D-glucopyranoside ligase of Mycolicibacterium vanbaalenii (strain DSM 7251 / JCM 13017 / BCRC 16820 / KCTC 9966 / NRRL B-24157 / PYR-1) (Mycobacterium vanbaalenii).